Consider the following 454-residue polypeptide: Bifunctional protein GlmU (454 aa).

The tract at residues 1-226 (MSLEIVILAA…AMEVQGVNDR (226 aa)) is pyrophosphorylase. UDP-N-acetyl-alpha-D-glucosamine contacts are provided by residues 8–11 (LAAG), Lys22, Gln73, 78–79 (GT), 99–101 (YGD), Gly136, Glu151, Asn166, and Asn224. Residue Asp101 coordinates Mg(2+). Asn224 is a binding site for Mg(2+). The tract at residues 227-247 (MQQAQLERHYQRLRAEELMRQ) is linker. Residues 248–454 (GVTLLDPQRL…NWKRPEKIRK (207 aa)) are N-acetyltransferase. Residues Arg330 and Lys348 each contribute to the UDP-N-acetyl-alpha-D-glucosamine site. The active-site Proton acceptor is His360. UDP-N-acetyl-alpha-D-glucosamine contacts are provided by Tyr363 and Asn374. Residues Ala377, 383 to 384 (NY), Ser402, Ala420, and Arg437 contribute to the acetyl-CoA site.

In the N-terminal section; belongs to the N-acetylglucosamine-1-phosphate uridyltransferase family. It in the C-terminal section; belongs to the transferase hexapeptide repeat family. As to quaternary structure, homotrimer. Requires Mg(2+) as cofactor.

Its subcellular location is the cytoplasm. The catalysed reaction is alpha-D-glucosamine 1-phosphate + acetyl-CoA = N-acetyl-alpha-D-glucosamine 1-phosphate + CoA + H(+). It carries out the reaction N-acetyl-alpha-D-glucosamine 1-phosphate + UTP + H(+) = UDP-N-acetyl-alpha-D-glucosamine + diphosphate. It functions in the pathway nucleotide-sugar biosynthesis; UDP-N-acetyl-alpha-D-glucosamine biosynthesis; N-acetyl-alpha-D-glucosamine 1-phosphate from alpha-D-glucosamine 6-phosphate (route II): step 2/2. Its pathway is nucleotide-sugar biosynthesis; UDP-N-acetyl-alpha-D-glucosamine biosynthesis; UDP-N-acetyl-alpha-D-glucosamine from N-acetyl-alpha-D-glucosamine 1-phosphate: step 1/1. The protein operates within bacterial outer membrane biogenesis; LPS lipid A biosynthesis. In terms of biological role, catalyzes the last two sequential reactions in the de novo biosynthetic pathway for UDP-N-acetylglucosamine (UDP-GlcNAc). The C-terminal domain catalyzes the transfer of acetyl group from acetyl coenzyme A to glucosamine-1-phosphate (GlcN-1-P) to produce N-acetylglucosamine-1-phosphate (GlcNAc-1-P), which is converted into UDP-GlcNAc by the transfer of uridine 5-monophosphate (from uridine 5-triphosphate), a reaction catalyzed by the N-terminal domain. This is Bifunctional protein GlmU from Pseudomonas paraeruginosa (strain DSM 24068 / PA7) (Pseudomonas aeruginosa (strain PA7)).